Here is a 308-residue protein sequence, read N- to C-terminus: E3 ubiquitin-protein ligase SINAT2 (308 aa).

The RING-type zinc finger occupies 60–96; it reads CPVCTNLMYPPIHQCPNGHTLCSNCKLRVQNTCPTCR. An SBD region spans residues 110 to 303; the sequence is VAESLEVPCR…QELKLRVTGR (194 aa). The SIAH-type zinc finger occupies 113–173; that stretch reads SLEVPCRYQN…LVVHLKDDHK (61 aa). Zn(2+) is bound by residues C118, C125, H137, C141, C148, C155, H167, and H172.

This sequence belongs to the SINA (Seven in absentia) family. In terms of assembly, interacts with RAP2-2. Interacts with SINAT6. Interacts with ATG6 and TRAF1A. Interacts with WAV3. Interacts with FREE1. Interacts with ELC/VPS23A.

It localises to the endosome. The protein localises to the multivesicular body. It is found in the cytoplasmic vesicle. The protein resides in the autophagosome. The enzyme catalyses S-ubiquitinyl-[E2 ubiquitin-conjugating enzyme]-L-cysteine + [acceptor protein]-L-lysine = [E2 ubiquitin-conjugating enzyme]-L-cysteine + N(6)-ubiquitinyl-[acceptor protein]-L-lysine.. It functions in the pathway protein modification; protein ubiquitination. E3 ubiquitin-protein ligase that mediates ubiquitination and subsequent proteasomal degradation of target proteins. E3 ubiquitin ligases accept ubiquitin from an E2 ubiquitin-conjugating enzyme in the form of a thioester and then directly transfers the ubiquitin to targeted substrates. It probably triggers the ubiquitin-mediated degradation of different substrates. Mediates the proteasomal-dependent degradation of ATG6, a component of the autophagosome complex. Requires TRAF1A/MUSE14 and TRAF1B/MUSE13 to target ATG6 for ubiquitination and subsequent regulation of autophagosome assembly. Modulates directly the ubiquitination and proteasomal-dependent degradation of FREE1, a component of the ESCRT-I complex. Modulates directly the ubiquitination and proteasomal-dependent degradation of ELC/VPS23A, a component of the ESCRT-I complex. The chain is E3 ubiquitin-protein ligase SINAT2 from Arabidopsis thaliana (Mouse-ear cress).